Here is a 409-residue protein sequence, read N- to C-terminus: Autophagy-related protein 37 (409 aa).

At 1-313 (MSESIDRVFV…LKLIKTVIKH (313 aa)) the chain is on the cytoplasmic side. One can recognise an ACB domain in the interval 5-103 (IDRVFVKAIG…LIDTMKQFAS (99 aa)). A helical membrane pass occupies residues 314–334 (VAIDAVIIAVLVAVIKRSIII). At 335–409 (PNLISNEISL…VSRIRLIKRN (75 aa)) the chain is on the peroxisomal side.

This sequence belongs to the ATG37 family. Interacts with ATG30 and PEX3. Post-translationally, phosphorylated.

Its subcellular location is the peroxisome membrane. In terms of biological role, acyl-CoA binding protein which acts as the peroxisome receptor for pexophagy. Required for both micropexophagy and macropexophagy, but not for the cytoplasm to vacuole transport (Cvt) or autophagy pathways. Required for functional micropexophagic apparatus (MIPA) and relocation of ATG11 to the peroxisome-sequestering arms of the vacuole. Binds palmitoyl-CoA but not oleyl-CoA. The chain is Autophagy-related protein 37 from Komagataella phaffii (strain GS115 / ATCC 20864) (Yeast).